The sequence spans 554 residues: Bifunctional epoxide hydrolase 2 (554 aa).

A phosphatase region spans residues 1–224 (MALRVAAFDL…KVTGTQFPEA (224 aa)). Positions 9 and 11 each coordinate Mg(2+). At Lys-55 the chain carries N6-succinyllysine. 123–124 (TN) is a binding site for phosphate. Residue Lys-176 is modified to N6-acetyllysine; alternate. Position 176 is an N6-succinyllysine; alternate (Lys-176). Asp-185 contributes to the Mg(2+) binding site. An N6-acetyllysine mark is found at Lys-191 and Lys-215. The segment at 233–554 (NDVSHGYVTV…IQNPSVTSKI (322 aa)) is epoxide hydrolase. One can recognise an AB hydrolase-1 domain in the interval 257–530 (PAICLCHGFP…CGHWTQIEKP (274 aa)). Asp-333 serves as the catalytic Nucleophile. Ser-368 is modified (phosphoserine). Tyr-381 is a binding site for substrate. Residues Lys-420 and Lys-454 each carry the N6-succinyllysine modification. The Proton donor role is filled by Tyr-465. Lys-504 is modified (N6-succinyllysine). A lipid anchor (S-(15-deoxy-Delta12,14-prostaglandin J2-9-yl)cysteine) is attached at Cys-521. Catalysis depends on His-523, which acts as the Proton acceptor. The short motif at 552 to 554 (SKI) is the Microbody targeting signal element. Lys-553 carries the post-translational modification N6-succinyllysine.

The protein belongs to the AB hydrolase superfamily. Epoxide hydrolase family. In terms of assembly, homodimer. It depends on Mg(2+) as a cofactor. Post-translationally, the covalent modification of cysteine by 15-deoxy-Delta12,14-prostaglandin-J2 is autocatalytic and reversible. It may occur as an alternative to other cysteine modifications, such as S-nitrosylation and S-palmitoylation.

The protein localises to the cytoplasm. Its subcellular location is the peroxisome. It catalyses the reaction an epoxide + H2O = an ethanediol. The enzyme catalyses (9S,10S)-10-hydroxy-9-(phosphooxy)octadecanoate + H2O = (9S,10S)-9,10-dihydroxyoctadecanoate + phosphate. It carries out the reaction 8-hydroxy-(11S,12S)-epoxy-(5Z,9E,14Z)-eicosatrienoate + H2O = (8,11R,12S)-trihydroxy-(5Z,9E,14Z)-eicosatrienoate. The catalysed reaction is 10-hydroxy-(11S,12S)-epoxy- (5Z,8Z,14Z)-eicosatrienoate + H2O = (10,11S,12R)-trihydroxy-(5Z,8Z,14Z)-eicosatrienoate. It catalyses the reaction 12-phosphooxy-(9Z)-octadecenoate + H2O = 12-hydroxy-(9Z)-octadecenoate + phosphate. The enzyme catalyses 12-phosphooxy-(9E)-octadecenoate + H2O = 12-hydroxy-(9E)-octadecenoate + phosphate. It carries out the reaction 12-(phosphooxy)octadecanoate + H2O = 12-hydroxyoctadecanoate + phosphate. The catalysed reaction is 8,9-epoxy-(5Z,11Z,14Z)-eicosatrienoate + H2O = 8,9-dihydroxy-(5Z,11Z,14Z)-eicosatrienoate. It catalyses the reaction 11,12-epoxy-(5Z,8Z,14Z)-eicosatrienoate + H2O = 11,12-dihydroxy-(5Z,8Z,14Z)-eicosatrienoate. The enzyme catalyses 14,15-epoxy-(5Z,8Z,11Z)-eicosatrienoate + H2O = 14,15-dihydroxy-(5Z,8Z,11Z)-eicosatrienoate. It carries out the reaction 9,10-epoxy-(12Z)-octadecenoate + H2O = 9,10-dihydroxy-(12Z)-octadecenoate. The catalysed reaction is 1-tetradecanoyl-sn-glycerol 3-phosphate + H2O = 1-tetradecanoyl-sn-glycerol + phosphate. It catalyses the reaction 1-octadecanoyl-sn-glycero-3-phosphate + H2O = 1-octadecanoyl-sn-glycerol + phosphate. The enzyme catalyses 1-(5Z,8Z,11Z,14Z-eicosatetraenoyl)-sn-glycero-3-phosphate + H2O = 1-(5Z,8Z,11Z,14Z-eicosatetraenoyl)-sn-glycerol + phosphate. It carries out the reaction 1-hexadecanoyl-sn-glycero-3-phosphate + H2O = 1-hexadecanoyl-sn-glycerol + phosphate. The catalysed reaction is 1-(9Z-octadecenoyl)-sn-glycero-3-phosphate + H2O = 1-(9Z-octadecenoyl)-sn-glycerol + phosphate. It catalyses the reaction (8S,9R)-epoxy-(5Z,11Z,14Z)-eicosatrienoate + H2O = (8S,9S)-dihydroxy-(5Z,11Z,14Z)-eicosatrienoate. The enzyme catalyses (11S,12R)-epoxy-(5Z,8Z,14Z)-eicosatrienoate + H2O = (11R,12R)-dihydroxy-(5Z,8Z,14Z)-eicosatrienoate. It carries out the reaction (11S,12R)-epoxy-(5Z,8Z,14Z)-eicosatrienoate + H2O = (11S,12S)-dihydroxy-(5Z,8Z,14Z)-eicosatrienoate. The catalysed reaction is (14S,15R)-epoxy-(5Z,8Z,11Z)-eicosatrienoate + H2O = (14R,15R)-dihydroxy-(5Z,8Z,11Z)-eicosatrienoate. It catalyses the reaction (14S,15R)-epoxy-(5Z,8Z,11Z)-eicosatrienoate + H2O = (14S,15S)-dihydroxy-(5Z,8Z,11Z)-eicosatrienoate. The enzyme catalyses (11R,12S)-epoxy-(5Z,8Z,14Z)-eicosatrienoate + H2O = (11S,12S)-dihydroxy-(5Z,8Z,14Z)-eicosatrienoate. It carries out the reaction (11R,12S)-epoxy-(5Z,8Z,14Z)-eicosatrienoate + H2O = (11R,12R)-dihydroxy-(5Z,8Z,14Z)-eicosatrienoate. The catalysed reaction is (8S,9R)-epoxy-(5Z,11Z,14Z)-eicosatrienoate + H2O = (8R,9R)-dihydroxy-(5Z,11Z,14Z)-eicosatrienoate. It catalyses the reaction (14R,15S)-epoxy-(5Z,8Z,11Z)-eicosatrienoate + H2O = (14R,15R)-dihydroxy-(5Z,8Z,11Z)-eicosatrienoate. Inhibited by 1-(1-acetylpiperidin-4-yl)-3-(4-(trifl uoromethoxy)phenyl)urea (TPAU), 1-cyclohexyl-3-dodecylurea (CDU), 12-(3-adamantan-1-yl-ureido)-dodecanoic acid (AUDA), 1-((3S, 5S, 7S)-adamantan-1-yl)-3-(5-(2-(2-ethoxyethoxy) ethoxy)pentyl)urea (AEPU), N-adamantyl-N[']-cyclohexyl urea (ACU), 4-(((1S, 4S)-4-(3-((3S, 5S, 7S)-adamantan-1-yl) ureido)cyclohexyl)oxy)benzoic acid (c-AUCB), 4-(((1R, 4R)-4-(3-((3S, 5S, 7S)-adamantan-1-yl)ureido)cyclohexyl)oxy)benzoic acid (t-AUCB), 4-(((1R, 4R)-4-(3-(4(trifluoromethoxy)phenyl)ureido)cyclohexyl)oxy)benzoic acid (t-TAUCB) and to a lesser extent by 8-(3-((3S, 5S, 7S)-adamantan-1-yl)ureido) octanoic acid (AUOA). Phosphatase activity is inhibited by dodecyl-phosphate, phospholipids such as phospho-lysophosphatidic acids and fatty acids such as palmitic acid and lauric acid. In terms of biological role, bifunctional enzyme. The C-terminal domain has epoxide hydrolase activity and acts on epoxides (alkene oxides, oxiranes) and arene oxides. Plays a role in xenobiotic metabolism by degrading potentially toxic epoxides. Also determines steady-state levels of physiological mediators. The N-terminal domain has lipid phosphatase activity, with the highest activity towards threo-9,10-phosphonooxy-hydroxy-octadecanoic acid, followed by erythro-9,10-phosphonooxy-hydroxy-octadecanoic acid, 12-phosphonooxy-octadec-9Z-enoic acid and 12-phosphonooxy-octadec-9E-enoic acid. Its function is as follows. Bifunctional enzyme. The C-terminal domain has epoxide hydrolase activity and acts on epoxides (alkene oxides, oxiranes) and arene oxides. Plays a role in xenobiotic metabolism by degrading potentially toxic epoxides. Also determines steady-state levels of physiological mediators. Functionally, bifunctional enzyme. The N-terminal domain has lipid phosphatase activity, with the highest activity towards threo-9,10-phosphonooxy-hydroxy-octadecanoic acid, followed by erythro-9,10-phosphonooxy-hydroxy-octadecanoic acid, 12-phosphonooxy-octadec-9Z-enoic acid and 12-phosphonooxy-octadec-9E-enoic acid. Has phosphatase activity toward lyso-glycerophospholipids with also some lower activity toward lysolipids of sphingolipid and isoprenoid phosphates. The sequence is that of Bifunctional epoxide hydrolase 2 from Rattus norvegicus (Rat).